The following is a 153-amino-acid chain: NAD(P)H-quinone oxidoreductase subunit N (153 aa).

It belongs to the complex I NdhN subunit family. As to quaternary structure, NDH-1 can be composed of about 15 different subunits; different subcomplexes with different compositions have been identified which probably have different functions.

Its subcellular location is the cellular thylakoid membrane. The enzyme catalyses a plastoquinone + NADH + (n+1) H(+)(in) = a plastoquinol + NAD(+) + n H(+)(out). It catalyses the reaction a plastoquinone + NADPH + (n+1) H(+)(in) = a plastoquinol + NADP(+) + n H(+)(out). Functionally, NDH-1 shuttles electrons from an unknown electron donor, via FMN and iron-sulfur (Fe-S) centers, to quinones in the respiratory and/or the photosynthetic chain. The immediate electron acceptor for the enzyme in this species is believed to be plastoquinone. Couples the redox reaction to proton translocation, and thus conserves the redox energy in a proton gradient. Cyanobacterial NDH-1 also plays a role in inorganic carbon-concentration. In Prochlorococcus marinus (strain MIT 9313), this protein is NAD(P)H-quinone oxidoreductase subunit N.